Here is a 258-residue protein sequence, read N- to C-terminus: Global transcriptional regulator CodY (258 aa).

A GAF domain region spans residues 1 to 156; the sequence is MSSLLSKTRR…SATIVGMEML (156 aa). Positions 204 to 223 form a DNA-binding region, H-T-H motif; sequence ASKIADKVGITRSVIVNALR.

Belongs to the CodY family.

It is found in the cytoplasm. DNA-binding global transcriptional regulator which is involved in the adaptive response to starvation and acts by directly or indirectly controlling the expression of numerous genes in response to nutrient availability. During rapid exponential growth, CodY is highly active and represses genes whose products allow adaptation to nutrient depletion. In Clostridium botulinum (strain Alaska E43 / Type E3), this protein is Global transcriptional regulator CodY.